The chain runs to 480 residues: GTPase Obg (480 aa).

Residues Thr2–Val159 enclose the Obg domain. The 182-residue stretch at Ala160–Ala341 folds into the OBG-type G domain. Residues Gly166–Ser173, Phe191–Ala195, Asp212–Gly215, Asn292–Asp295, and Ser322–Val324 each bind GTP. Mg(2+) contacts are provided by Ser173 and Thr193. Residues Pro359–Pro437 enclose the OCT domain. A disordered region spans residues Ala441–Glu480. Basic and acidic residues predominate over residues Thr452–Lys468. Residues Ala469 to Glu480 are compositionally biased toward basic residues.

This sequence belongs to the TRAFAC class OBG-HflX-like GTPase superfamily. OBG GTPase family. Monomer. The cofactor is Mg(2+).

The protein localises to the cytoplasm. Its function is as follows. An essential GTPase which binds GTP, GDP and possibly (p)ppGpp with moderate affinity, with high nucleotide exchange rates and a fairly low GTP hydrolysis rate. Plays a role in control of the cell cycle, stress response, ribosome biogenesis and in those bacteria that undergo differentiation, in morphogenesis control. The polypeptide is GTPase Obg (Mycolicibacterium vanbaalenii (strain DSM 7251 / JCM 13017 / BCRC 16820 / KCTC 9966 / NRRL B-24157 / PYR-1) (Mycobacterium vanbaalenii)).